A 281-amino-acid chain; its full sequence is MASNQELVQIATNFLLNAPPCEFMEVVSDVRALLPSESLLNASAGSTFREYNTSQMVSVQTSKGSALITKEGEISNNEYLDPKNKQVITYDHIKQEVTGERSASGEIEQDIEQYRAAFDEEATKYCNEYYPNGVSAVYGTKVSEGIKITVCISTCIYKPNAFYSGRWRSVWTCTFKPGSGNVTSNGKVQVNVHYFEDGNVQLNTVTQKQTTSPSADAQSTAVNAFKAIGKAELNLHTALDNNYSTMGDTTFKALRRALPINRTKINWQKVKNFKIANELNK.

This sequence belongs to the F-actin-capping protein alpha subunit family. In terms of assembly, component of the F-actin capping complex, composed of a heterodimer of an alpha and a beta subunit.

The protein resides in the cytoplasm. It is found in the cytoskeleton. Functionally, F-actin-capping proteins bind in a Ca(2+)-independent manner to the fast growing ends of actin filaments (barbed end) thereby blocking the exchange of subunits at these ends. Unlike other capping proteins (such as gelsolin and severin), these proteins do not sever actin filaments. The protein is F-actin-capping protein subunit alpha (acpB) of Dictyostelium discoideum (Social amoeba).